Here is a 131-residue protein sequence, read N- to C-terminus: Hydrophilin PGA14 (131 aa).

Positions 1–18 are cleaved as a signal peptide; the sequence is MKFTTVATVFAISSLAAA. Basic and acidic residues-rich tracts occupy residues 42–59 and 79–96; these read YGRF…ETGT and KESD…RDSK. The interval 42-110 is disordered; the sequence is YGRFDKTSRS…NSTTSSGNNG (69 aa). N-linked (GlcNAc...) asparagine glycans are attached at residues Asn97 and Asn101. Low complexity predominate over residues 97 to 110; it reads NASSNSTTSSGNNG. Ser105 is lipidated: GPI-anchor amidated serine. A propeptide spans 106 to 131 (removed in mature form); that stretch reads SGNNGVATGVSLGLAGVLAVGAALVI.

The protein belongs to the PGA14 family. The GPI-anchor is attached to the protein in the endoplasmic reticulum and serves to target the protein to the cell surface. There, the glucosamine-inositol phospholipid moiety is cleaved off and the GPI-modified mannoprotein is covalently attached via its lipidless GPI glycan remnant to the 1,6-beta-glucan of the outer cell wall layer.

The protein resides in the secreted. It is found in the cell wall. It localises to the membrane. Hydrophilin which is essential to overcome the simple stress of the desiccation-rehydration process. This is Hydrophilin PGA14 (PGA14) from Candida albicans (strain SC5314 / ATCC MYA-2876) (Yeast).